The chain runs to 376 residues: Polygalacturonase (376 aa).

Positions 1 to 20 are cleaved as a signal peptide; sequence MASSLKLGLIALLGATAVNA. An intrachain disulfide couples Cys-39 to Cys-57. One copy of the PbH1 1 repeat lies at 170–208; sequence AKELTLSGITVDTADGDSNGGHNTDAFDVGSSNGVYITS. Asp-215 functions as the Proton donor in the catalytic mechanism. Cys-217 and Cys-233 are disulfide-bonded. PbH1 repeat units lie at residues 223 to 243, 252 to 273, 281 to 303, and 315 to 360; these read GTNV…SIGS, VDGV…RIKT, VQGV…VIEQ, and TSGV…SITG. The active site involves His-237. 2 disulfides stabilise this stretch: Cys-343–Cys-348 and Cys-367–Cys-376.

Belongs to the glycosyl hydrolase 28 family.

It is found in the secreted. It catalyses the reaction (1,4-alpha-D-galacturonosyl)n+m + H2O = (1,4-alpha-D-galacturonosyl)n + (1,4-alpha-D-galacturonosyl)m.. This is Polygalacturonase (PGG1) from Penicillium griseoroseum.